An 84-amino-acid chain; its full sequence is Small ribosomal subunit protein bS20 (84 aa).

This sequence belongs to the bacterial ribosomal protein bS20 family.

Binds directly to 16S ribosomal RNA. In Bacteroides fragilis (strain ATCC 25285 / DSM 2151 / CCUG 4856 / JCM 11019 / LMG 10263 / NCTC 9343 / Onslow / VPI 2553 / EN-2), this protein is Small ribosomal subunit protein bS20.